The primary structure comprises 289 residues: Diaminopimelate epimerase (289 aa).

Residues Asn-13, Gln-47, and Asn-67 each coordinate substrate. Cys-76 functions as the Proton donor in the catalytic mechanism. Residues 77 to 78, Asn-167, Asn-200, and 218 to 219 each bind substrate; these read GN and ER. The Proton acceptor role is filled by Cys-227. Position 228 to 229 (228 to 229) interacts with substrate; the sequence is GT.

It belongs to the diaminopimelate epimerase family. As to quaternary structure, homodimer.

Its subcellular location is the cytoplasm. It carries out the reaction (2S,6S)-2,6-diaminopimelate = meso-2,6-diaminopimelate. It functions in the pathway amino-acid biosynthesis; L-lysine biosynthesis via DAP pathway; DL-2,6-diaminopimelate from LL-2,6-diaminopimelate: step 1/1. In terms of biological role, catalyzes the stereoinversion of LL-2,6-diaminopimelate (L,L-DAP) to meso-diaminopimelate (meso-DAP), a precursor of L-lysine and an essential component of the bacterial peptidoglycan. This Burkholderia pseudomallei (strain K96243) protein is Diaminopimelate epimerase.